We begin with the raw amino-acid sequence, 466 residues long: 3-isopropylmalate dehydratase large subunit (466 aa).

The [4Fe-4S] cluster site is built by Cys347, Cys407, and Cys410.

It belongs to the aconitase/IPM isomerase family. LeuC type 1 subfamily. In terms of assembly, heterodimer of LeuC and LeuD. [4Fe-4S] cluster serves as cofactor.

It catalyses the reaction (2R,3S)-3-isopropylmalate = (2S)-2-isopropylmalate. Its pathway is amino-acid biosynthesis; L-leucine biosynthesis; L-leucine from 3-methyl-2-oxobutanoate: step 2/4. In terms of biological role, catalyzes the isomerization between 2-isopropylmalate and 3-isopropylmalate, via the formation of 2-isopropylmaleate. The polypeptide is 3-isopropylmalate dehydratase large subunit (Escherichia coli O127:H6 (strain E2348/69 / EPEC)).